The chain runs to 469 residues: ATP synthase subunit beta (469 aa).

ATP is bound at residue 155–162; sequence GGAGVGKT.

This sequence belongs to the ATPase alpha/beta chains family. As to quaternary structure, F-type ATPases have 2 components, CF(1) - the catalytic core - and CF(0) - the membrane proton channel. CF(1) has five subunits: alpha(3), beta(3), gamma(1), delta(1), epsilon(1). CF(0) has three main subunits: a(1), b(2) and c(9-12). The alpha and beta chains form an alternating ring which encloses part of the gamma chain. CF(1) is attached to CF(0) by a central stalk formed by the gamma and epsilon chains, while a peripheral stalk is formed by the delta and b chains.

It localises to the cell inner membrane. The catalysed reaction is ATP + H2O + 4 H(+)(in) = ADP + phosphate + 5 H(+)(out). In terms of biological role, produces ATP from ADP in the presence of a proton gradient across the membrane. The catalytic sites are hosted primarily by the beta subunits. The sequence is that of ATP synthase subunit beta from Helicobacter pylori (strain ATCC 700392 / 26695) (Campylobacter pylori).